An 852-amino-acid chain; its full sequence is Chitin synthase 1 (852 aa).

Disordered stretches follow at residues 27 to 46 (EDQD…TNYA) and 53 to 97 (SSLR…QANG). The span at 53-74 (SSLRSQKSANKPTTAQNRNSAA) shows a compositional bias: polar residues. 7 consecutive transmembrane segments (helical) span residues 492–509 (RWLN…IHFR), 532–552 (VISL…FYFI), 572–592 (IFDF…ICSM), 601–621 (FLFM…LFCS), 686–706 (FLPY…YAFC), 787–807 (THLV…ITTS), and 830–850 (CGLG…GIFT).

The protein belongs to the chitin synthase family. Class II subfamily.

It is found in the cell membrane. It carries out the reaction [(1-&gt;4)-N-acetyl-beta-D-glucosaminyl](n) + UDP-N-acetyl-alpha-D-glucosamine = [(1-&gt;4)-N-acetyl-beta-D-glucosaminyl](n+1) + UDP + H(+). Functionally, polymerizes chitin, a structural polymer of the cell wall and septum, by transferring the sugar moiety of UDP-GlcNAc to the non-reducing end of the growing chitin polymer. The polypeptide is Chitin synthase 1 (CHS1) (Mucor circinelloides f. lusitanicus (Mucor racemosus var. lusitanicus)).